Consider the following 377-residue polypeptide: MAEFVRAEILGTKFEYTTRYVNPQPIGMGSFGLVCSAFDQITQQPVALKKIMKPFDSSSLAKRTYREIRLLKYLRHENLICLRDIFISPLEDIYIATELLGTDLGRLLSIKPLDSKFSQYFIYQILRGLKYIHSANVIHRDLKPTNILINENCDLKICDFGLARLQEPQMTGYVATRYYRAPEIMLTWQRYGVQVDVWSAGCILAEMLRGKPLFPGKDHVHQFHLITNVLGNPPDAVIEKITSKNTVNFVKSLPSREPRDLSTVIMTHTSIAIDLLKKMLVIDPDTRISAQDALRHPYLAPYHDPTDEPAASGPFDWSFDSADFPKETWKIMIYSEVLDYLNVGNPADPAPFDPSTPFDPSALEREFSEFLSDSGQI.

One can recognise a Protein kinase domain in the interval 20–299 (YVNPQPIGMG…AQDALRHPYL (280 aa)). ATP-binding positions include 26 to 34 (IGMGSFGLV) and K49. The Proton acceptor role is filled by D141. T171 is modified (phosphothreonine). A TXY motif is present at residues 171–173 (TGY). A Phosphotyrosine modification is found at Y173.

The protein belongs to the protein kinase superfamily. Ser/Thr protein kinase family. MAP kinase subfamily. HOG1 sub-subfamily. Requires Mg(2+) as cofactor. Post-translationally, dually phosphorylated on Thr-171 and Tyr-173, which activates the enzyme.

The enzyme catalyses L-seryl-[protein] + ATP = O-phospho-L-seryl-[protein] + ADP + H(+). The catalysed reaction is L-threonyl-[protein] + ATP = O-phospho-L-threonyl-[protein] + ADP + H(+). With respect to regulation, activated by tyrosine and threonine phosphorylation. Functionally, mitogen-activated protein kinase required for growth on media where sorbitol or mannitol is the sole carbon source. The sequence is that of Mitogen-activated protein kinase mpkC (mpkc) from Neosartorya fischeri (strain ATCC 1020 / DSM 3700 / CBS 544.65 / FGSC A1164 / JCM 1740 / NRRL 181 / WB 181) (Aspergillus fischerianus).